The sequence spans 657 residues: Probable potassium transport system protein Kup (657 aa).

Positions 1 to 25 (MGSGPADEEHTVDTEPGVSPPRRTV) are disordered. 12 helical membrane passes run 35-55 (VVVG…IYTI), 77-97 (VVSL…VLLV), 127-147 (TAVL…DSMI), 165-185 (PGLE…LFSV), 196-216 (LFGP…VSGI), 234-254 (FFFG…LAVT), 275-295 (WLVL…ALLL), 315-335 (WPMV…VITG), 365-385 (IYVP…VFAF), 394-414 (AFGM…FYIV), 422-442 (LWLV…FLAA), and 447-467 (LVHG…VMTT).

The protein belongs to the HAK/KUP transporter (TC 2.A.72) family.

The protein localises to the cell membrane. It carries out the reaction K(+)(in) + H(+)(in) = K(+)(out) + H(+)(out). Its function is as follows. Transport of potassium into the cell. Likely operates as a K(+):H(+) symporter. The polypeptide is Probable potassium transport system protein Kup (Rhodococcus jostii (strain RHA1)).